The primary structure comprises 260 residues: UPF0246 protein Bcen2424_2223 (260 aa).

It belongs to the UPF0246 family.

This is UPF0246 protein Bcen2424_2223 from Burkholderia cenocepacia (strain HI2424).